We begin with the raw amino-acid sequence, 145 residues long: Transcription antitermination protein NusB (145 aa).

Belongs to the NusB family.

In terms of biological role, involved in transcription antitermination. Required for transcription of ribosomal RNA (rRNA) genes. Binds specifically to the boxA antiterminator sequence of the ribosomal RNA (rrn) operons. The polypeptide is Transcription antitermination protein NusB (Geobacter sp. (strain M21)).